A 200-amino-acid polypeptide reads, in one-letter code: Beta-1,6-glucan synthesis-associated protein KEG1 (200 aa).

At 1–15 (MAGIKLTHKLYQYYQ) the chain is on the lumenal side. The chain crosses the membrane as a helical span at residues 16–36 (LATSFLYAALLIRWLILMPLV). Topologically, residues 37-44 (GSRFLPGG) are cytoplasmic. Residues 45-65 (IHEFLIYLMFYSSIMEVIWLL) form a helical membrane-spanning segment. At 66-82 (RFHGFKYGLLSRTFLKD) the chain is on the lumenal side. The helical transmembrane segment at 83 to 103 (LNFIYLVSVIHFYDDYEHALI) threads the bilayer. Topologically, residues 104-145 (LKNASYSSFIISLSLSQAYCHWCKLFKRKGVKERTLVWKVNT) are cytoplasmic. A helical membrane pass occupies residues 146–166 (FVTLPILYLSEFALLLLNIQV). The Lumenal segment spans residues 167–173 (KNYHSTP). The chain crosses the membrane as a helical span at residues 174-194 (TLDIINRVVLLAYFPVLLTAY). Topologically, residues 195 to 200 (KKLLTK) are cytoplasmic.

In terms of assembly, interacts with KRE6.

Its subcellular location is the endoplasmic reticulum membrane. In terms of biological role, involved in the biosynthesis of (1-&gt;6)-beta-D-glucan polymers of the cell wall. Required for viability. Involved in maintaining chromosome stability. This chain is Beta-1,6-glucan synthesis-associated protein KEG1 (KEG1), found in Saccharomyces cerevisiae (strain ATCC 204508 / S288c) (Baker's yeast).